The primary structure comprises 318 residues: 5'-3' exonuclease (318 aa).

Residues 194-278 (AYAELALLRG…ATDAPVTLST (85 aa)) form the 5'-3' exonuclease domain.

Functionally, 5'-3' exonuclease acting preferentially on double-stranded DNA. In Mycobacterium tuberculosis (strain ATCC 25618 / H37Rv), this protein is 5'-3' exonuclease.